Reading from the N-terminus, the 243-residue chain is Probable 2-phosphosulfolactate phosphatase (243 aa).

It belongs to the ComB family. It depends on Mg(2+) as a cofactor.

It carries out the reaction (2R)-O-phospho-3-sulfolactate + H2O = (2R)-3-sulfolactate + phosphate. The polypeptide is Probable 2-phosphosulfolactate phosphatase (Prochlorococcus marinus (strain MIT 9313)).